The sequence spans 361 residues: GTP 3',8-cyclase (361 aa).

The interval 1-30 (MTVTALGLPTVARSTGDGSAGASPAPADGP) is disordered. Residues 16-30 (GDGSAGASPAPADGP) are compositionally biased toward low complexity. One can recognise a Radical SAM core domain in the interval 34–252 (TYGRAATDLR…LQQHFELTPD (219 aa)). Residue arginine 43 coordinates GTP. [4Fe-4S] cluster contacts are provided by cysteine 50 and cysteine 54. Residue tyrosine 56 coordinates S-adenosyl-L-methionine. [4Fe-4S] cluster is bound at residue cysteine 57. Arginine 94 serves as a coordination point for GTP. S-adenosyl-L-methionine is bound at residue glycine 98. A GTP-binding site is contributed by threonine 125. Residue serine 149 coordinates S-adenosyl-L-methionine. Lysine 186 serves as a coordination point for GTP. An S-adenosyl-L-methionine-binding site is contributed by methionine 220. The [4Fe-4S] cluster site is built by cysteine 288 and cysteine 291. GTP is bound at residue 293-295 (RTR). Cysteine 305 provides a ligand contact to [4Fe-4S] cluster.

The protein belongs to the radical SAM superfamily. MoaA family. In terms of assembly, monomer and homodimer. It depends on [4Fe-4S] cluster as a cofactor.

The catalysed reaction is GTP + AH2 + S-adenosyl-L-methionine = (8S)-3',8-cyclo-7,8-dihydroguanosine 5'-triphosphate + 5'-deoxyadenosine + L-methionine + A + H(+). Its pathway is cofactor biosynthesis; molybdopterin biosynthesis. Its function is as follows. Catalyzes the cyclization of GTP to (8S)-3',8-cyclo-7,8-dihydroguanosine 5'-triphosphate. The chain is GTP 3',8-cyclase from Mycolicibacterium smegmatis (strain ATCC 700084 / mc(2)155) (Mycobacterium smegmatis).